The chain runs to 578 residues: MAKSELKRKKHQSGNEEVKEKRQKPLKNDKKIAEELPQDEDDYEQEEENEDADQNTSVESESEELDNENEDERVQKSVNLNASSTSDIEKFSDLQLSENIQKAIKEMGFETMTEIQKRSIPPLLAGRDVLGAAKTGSGKTLAFLIPTIEMLYALKFKPRNGTGVIIISPTRELALQIFGVAKELLKYHHQTFGIVIGGANRRAEADKLVKGVNLLVATPGRLLDHLQNTKGFVFRNLRSLVIDEADRILEIGFEDEMRQIMKILPSENRQTLLFSATQTTKVEDLARISLKPGPLYVNVDSGKPTSTVEGLEQGYVVVDSDKRFLLLFSFLKRNLKKKVIVFMSSCASVKYMAELLNYIDLPVLDLHGKQKQQRRTNTFFEFCNAEKGILLCTNVAARGLDIPAVDWIVQYDPPDDPRDYIHRVGRTARGTKGTGKSLMFLAPSELGFLRYLKTAKVSLNEFEFPANKVANVQSQLEKLVSKNYYLQQSAKDGYRSYLQAYASYSLKSIFDINKLDLAKVAKSFGFAHPPNVNITIGASGRTDKKERRAGYNKKNHVDVYSKQRSSAISQDKERGWSR.

Residues 1–12 (MAKSELKRKKHQ) are compositionally biased toward basic residues. The disordered stretch occupies residues 1 to 81 (MAKSELKRKK…ERVQKSVNLN (81 aa)). Composition is skewed to acidic residues over residues 36 to 53 (LPQD…EDAD) and 60 to 71 (SESEELDNENED). Phosphoserine is present on residues Ser60 and Ser62. The short motif at 89–117 (EKFSDLQLSENIQKAIKEMGFETMTEIQK) is the Q motif element. The Helicase ATP-binding domain maps to 120–296 (IPPLLAGRDV…RISLKPGPLY (177 aa)). 133 to 140 (AKTGSGKT) serves as a coordination point for ATP. The DEAD box signature appears at 243–246 (DEAD). In terms of domain architecture, Helicase C-terminal spans 310–480 (GLEQGYVVVD…NVQSQLEKLV (171 aa)). Positions 322–338 (KRFLLLFSFLKRNLKKK) match the Bipartite nuclear localization signal motif. Over residues 543-561 (DKKERRAGYNKKNHVDVYS) the composition is skewed to basic and acidic residues. Positions 543–578 (DKKERRAGYNKKNHVDVYSKQRSSAISQDKERGWSR) are disordered.

It belongs to the DEAD box helicase family. DDX18/HAS1 subfamily. Associates in the nucleolus with the 60S and pre-60S ribosomal subunits.

It localises to the nucleus. Its subcellular location is the nucleolus. It carries out the reaction ATP + H2O = ADP + phosphate + H(+). ATP-dependent RNA helicase involved in 40S ribosomal subunit biogenesis. Required for the processing and cleavage of 35S pre-rRNA at sites A0, A1, and A2, leading to mature 18S rRNA. The protein is ATP-dependent RNA helicase has1 (has1) of Schizosaccharomyces pombe (strain 972 / ATCC 24843) (Fission yeast).